A 1230-amino-acid polypeptide reads, in one-letter code: Basic-leucine zipper transcription factor A (1230 aa).

Disordered stretches follow at residues 65–108 (LYLS…NIIN), 180–233 (LNGN…QQHQ), 270–310 (QQLK…PSTQ), and 422–578 (HQQN…RKKD). Composition is skewed to low complexity over residues 69–108 (NSSNNTNNNNNNNNNNNNNNNNNNNNNNNNNNNNNNNIIN), 192–233 (NNFS…QQHQ), 270–287 (QQLKQQQPQQHPIQSPQP), 295–310 (PSLQQHQTYSYTPSTQ), and 422–447 (HQQNIQQHQNQNQQQLQLPQPQQQQH). Polar residues-rich tracts occupy residues 448–458 (KSTPPTQNTPP) and 466–475 (TPTLTTNGKG). Residues 476-503 (SKSTPPTTTTTTTTTTSSSSSSSSSSSS) are compositionally biased toward low complexity. The segment covering 523–537 (PHHHHHHHNNHHHHH) has biased composition (basic residues). Over residues 541–554 (FSDENDEEFIDENE) the composition is skewed to acidic residues. Residues 555–618 (DKSKNKSRSS…LGDVMRPDFD (64 aa)) form the bZIP domain. The interval 556-586 (KSKNKSRSSQNIASRNYRQRKKDHISEVEFK) is basic motif. Residues 562–571 (RSSQNIASRN) are compositionally biased toward polar residues. The interval 590 to 604 (LSLENERLKQENHLL) is leucine-zipper. A coiled-coil region spans residues 728–753 (LKIDMELRTERDQLDREIKELFLKKI). Disordered stretches follow at residues 772–869 (TFNS…EHNK) and 1025–1230 (NYTN…TPNI). Low complexity-rich tracts occupy residues 774–803 (NSESDYPSSPSSASNSSNSPPTSSPTIITP) and 810–831 (NNQNNQNNNQMINSNSNNSNNN). A compositionally biased stretch (basic residues) spans 832 to 845 (SHHHHHHHHSHLHG). Over residues 1025–1042 (NYTNSPLITSSPSQLTPN) the composition is skewed to polar residues. 2 stretches are compositionally biased toward low complexity: residues 1052 to 1146 (NNNN…NNGN) and 1153 to 1193 (QALH…SPSS).

This sequence belongs to the bZIP family. As to quaternary structure, binds DNA as a dimer. Heterodimerizes with dimB; in vitro. Also able to form homodimer; in vitro.

The protein resides in the nucleus. Its function is as follows. Transcriptional regulator involved in DIF-1 signaling. DIF-1 (Differentiation Inducing Factor-1) is a signal molecule involved in the differentiation of pstO (prestalk-O) cells. Functions both as an activator of prestalk gene expression and a repressor of prespore gene expression. The polypeptide is Basic-leucine zipper transcription factor A (dimA) (Dictyostelium discoideum (Social amoeba)).